The chain runs to 301 residues: Rhodopsin (301 aa).

Over 1-18 (LHMIHLHWYQYPPMNPMM) the chain is Extracellular. Residues 19–43 (YPLLLIFMLFTGILCLAGNFVTIWV) form a helical membrane-spanning segment. The Cytoplasmic portion of the chain corresponds to 44-55 (FMNTKSLRTPAN). Residues 56-78 (LLVVNLAMSDFLMMFTMFPPMMV) traverse the membrane as a helical segment. Residues 79–92 (TCYYHTWTLGPTFC) are Extracellular-facing. Cys-92 and Cys-169 are oxidised to a cystine. The chain crosses the membrane as a helical span at residues 93–115 (QVYAFLGNLCGCASIWTMVFITF). The 'Ionic lock' involved in activated form stabilization motif lies at 116-118 (DRY). Over 116-134 (DRYNVIVKGVAGEPLSTKK) the chain is Cytoplasmic. A helical transmembrane segment spans residues 135-155 (ASLWILSVWVLSTAWCIAPFF). Over 156–182 (GWNHYVPEGNLTGCGTDYLSEDILSRS) the chain is Extracellular. N-linked (GlcNAc...) asparagine glycosylation occurs at Asn-165. The helical transmembrane segment at 183 to 204 (YLYIYSTWVYFLPLAITIYCYV) threads the bilayer. The Cytoplasmic segment spans residues 205 to 245 (FIIKAVAAHEKGMRDQAKKMGIKSLRNEEAQKTSAECRLAK). Residues 246–267 (NAMTTVALWFIAWTPCLLINWV) traverse the membrane as a helical segment. Residues 268-278 (GMFARSYLSPV) lie on the Extracellular side of the membrane. Residues 279–300 (YTIWGYVFAKANAVYNPIVYAI) form a helical membrane-spanning segment. Lys-288 carries the N6-(retinylidene)lysine modification.

It belongs to the G-protein coupled receptor 1 family. Opsin subfamily. Homodimer. Interacts with GNAQ. Post-translationally, contains one covalently linked retinal chromophore.

It localises to the cell projection. The protein resides in the rhabdomere membrane. Functionally, photoreceptor required for image-forming vision at low light intensity. Can use both retinal and 3-dehydroretinal as visual pigment. Light-induced isomerization of 11-cis to all-trans retinal triggers a conformational change that activates signaling via G-proteins. Signaling via GNAQ probably mediates the activation of phospholipase C. This is Rhodopsin (RHO) from Cambarus hubrichti (Salem cave crayfish).